The chain runs to 347 residues: Gentisate 1,2 dioxygenase 1 (347 aa).

A Cupin type-2 domain is found at 96 to 163 (LQLILPGEVA…DSDKPMIWMD (68 aa)).

This sequence belongs to the gentisate 1,2-dioxygenase family. In terms of assembly, homotetramer. The cofactor is Fe(2+).

The enzyme catalyses 2,5-dihydroxybenzoate + O2 = 3-maleylpyruvate + H(+). Completely inhibited by the presence of 5 mM Cu(2+). Partially inhibited with 5 mM Mn(2+), Zn(2+) or EDTA. Involved in the degradation of gentisate. Catalyzes the conversion of gentisate (2,5-dihydroxybenzoate) to maleylpyruvate. Exhibits broad substrate specificities towards alkyl and halogenated gentisates. In Aquipseudomonas alcaligenes (Pseudomonas alcaligenes), this protein is Gentisate 1,2 dioxygenase 1.